Reading from the N-terminus, the 550-residue chain is uncharacterized protein (550 aa).

The first 13 residues, 1-13 (MAGALFEPSFAAA), serve as a signal peptide directing secretion. The interval 312–358 (DAQPDPHLSGDEPPSRPLTPETTLFEALTPDPEPDPPATHAPAELIT) is disordered.

To M.tuberculosis Rv3776.

This is an uncharacterized protein from Mycobacterium tuberculosis (strain CDC 1551 / Oshkosh).